Here is a 140-residue protein sequence, read N- to C-terminus: Transcription antitermination protein NusB (140 aa).

The protein belongs to the NusB family.

Its function is as follows. Involved in transcription antitermination. Required for transcription of ribosomal RNA (rRNA) genes. Binds specifically to the boxA antiterminator sequence of the ribosomal RNA (rrn) operons. This Streptococcus pneumoniae (strain 70585) protein is Transcription antitermination protein NusB.